The sequence spans 174 residues: UBX domain-containing protein 5 (174 aa).

Positions 8–58 (QKEKFAEDRALLSQQNKEYAESLAKDIAKKEEKDKIRFEAEQKELRKKTIQ) form a coiled coil. Residues 74–120 (RLLVRYPNGSRLILSFSPSQPMTSLFDAIILNPACPDYFSVRSVYPR) form the UBX domain.

As to quaternary structure, forms a complex composed of deubiquitinating enzyme atx-3, adapter ubxn-5 and cdc-48.1. Interacts with atx-3 (via C-terminus). Interacts with cdc-48.1 (via N-terminus) and cdc-48.2. As to expression, specifically expressed in the germline.

Functionally, probably acts as an adapter for ATPase cdc-48.1 and/or cdc-48.2, conferring substrate specificity. Unlike other UBX domain-containing protein does not bind 'Lys-48'-polyubiquitinated chain. The chain is UBX domain-containing protein 5 from Caenorhabditis elegans.